Consider the following 321-residue polypeptide: Protein-L-isoaspartate O-methyltransferase (321 aa).

The segment covering 21–31 (KPAERQREKRI) has biased composition (basic and acidic residues). The segment at 21-65 (KPAERQREKRISSGVNAVSLPTPARTASAERASSTPAPGPGPQRV) is disordered. Low complexity predominate over residues 41 to 56 (PTPARTASAERASSTP). Serine 153 is an active-site residue.

Belongs to the methyltransferase superfamily. L-isoaspartyl/D-aspartyl protein methyltransferase family.

It localises to the cytoplasm. The enzyme catalyses [protein]-L-isoaspartate + S-adenosyl-L-methionine = [protein]-L-isoaspartate alpha-methyl ester + S-adenosyl-L-homocysteine. Its function is as follows. Catalyzes the methyl esterification of L-isoaspartyl residues in peptides and proteins that result from spontaneous decomposition of normal L-aspartyl and L-asparaginyl residues. It plays a role in the repair and/or degradation of damaged proteins. This is Protein-L-isoaspartate O-methyltransferase from Ralstonia nicotianae (strain ATCC BAA-1114 / GMI1000) (Ralstonia solanacearum).